The sequence spans 585 residues: Frizzled-5 (585 aa).

A signal peptide spans 1-26 (MARPDPSAPPSLLLLLLAQLVGRAAA). Topologically, residues 27 to 238 (ASKAPVCQEI…PDERTFATFW (212 aa)) are extracellular. The 123-residue stretch at 28–150 (SKAPVCQEIT…GDAEVLCMDY (123 aa)) folds into the FZ domain. Intrachain disulfides connect Cys33/Cys94, Cys41/Cys87, Cys78/Cys116, Cys105/Cys147, and Cys109/Cys133. An N-linked (GlcNAc...) asparagine glycan is attached at Asn47. An N-linked (GlcNAc...) asparagine glycan is attached at Asn151. Residues 156–182 (TTASPKSFPAKPTLPGPPGAPSSGGEC) form a disordered region. Residues 239–259 (IGLWSVLCFISTSTTVATFLI) traverse the membrane as a helical segment. The Cytoplasmic portion of the chain corresponds to 260–270 (DMERFRYPERP). The helical transmembrane segment at 271–291 (IIFLSACYLCVSLGFLVRLVV) threads the bilayer. The Extracellular portion of the chain corresponds to 292 to 315 (GHASVACSREHSHIHYETTGPALC). A helical membrane pass occupies residues 316 to 336 (TVVFLLVYFFGMASSIWWVIL). Residues 337–358 (SLTWFLAAGMKWGNEAIAGYAQ) are Cytoplasmic-facing. Residues 359-379 (YFHLAAWLIPSVKSITALALS) form a helical membrane-spanning segment. The Extracellular segment spans residues 380-402 (SVDGDPVAGICYVGNQNLNSLRG). The helical transmembrane segment at 403–423 (FVLGPLVLYLLVGTLFLLAGF) threads the bilayer. The Cytoplasmic portion of the chain corresponds to 424 to 449 (VSLFRIRSVIKQGGTKTDKLEKLMIR). A helical membrane pass occupies residues 450 to 470 (IGIFTLLYTVPASIVVACYLY). Over 471–500 (EQHYRESWEAALTCACPGPDAGQPRAKPEY) the chain is Extracellular. A helical membrane pass occupies residues 501-521 (WVLMLKYFMCLVVGITSGVWI). Residues 522 to 585 (WSGKTLESWR…YHKQVSLSHV (64 aa)) are Cytoplasmic-facing. The short motif at 582–584 (LSH) is the PDZ-binding element.

It belongs to the G-protein coupled receptor Fz/Smo family. Binding of unsaturated fatty acid molecules (via FZ domain) promotes homodimerization (via FZ domain). Interacts with WNT2B. Interacts with WNT7A. Interacts with GOPC. Post-translationally, ubiquitinated by RNF43 and ZNRF3, leading to its degradation by the proteasome. In terms of tissue distribution, detected in hippocampus (at protein level). Expressed in eye, kidney, lung, chondrocytes, epithelial cells of the small intestine and gobelet cells of the colon.

Its subcellular location is the cell membrane. It is found in the golgi apparatus membrane. The protein localises to the synapse. It localises to the perikaryon. The protein resides in the cell projection. Its subcellular location is the dendrite. It is found in the axon. In terms of biological role, receptor for Wnt proteins. Functions in the canonical Wnt/beta-catenin signaling pathway. In vitro activates WNT2, WNT10B, WNT5A, but not WNT2B or WNT4 signaling. In neurons, activation by WNT7A promotes formation of synapses. May be involved in transduction and intercellular transmission of polarity information during tissue morphogenesis and/or in differentiated tissues. Plays a role in yolk sac angiogenesis and in placental vascularization. Plays a role in ocular development. This chain is Frizzled-5 (Fzd5), found in Mus musculus (Mouse).